Consider the following 652-residue polypeptide: DNA ligase (652 aa).

NAD(+) contacts are provided by residues 29-33, 78-79, and E107; these read DSEYD and SL. K109 serves as the catalytic N6-AMP-lysine intermediate. The NAD(+) site is built by R130, E164, K278, and K302. C395, C398, C413, and C418 together coordinate Zn(2+). One can recognise a BRCT domain in the interval 577 to 652; that stretch reads VADAALSGLT…VRDEAWLESL (76 aa).

It belongs to the NAD-dependent DNA ligase family. LigA subfamily. Requires Mg(2+) as cofactor. The cofactor is Mn(2+).

The enzyme catalyses NAD(+) + (deoxyribonucleotide)n-3'-hydroxyl + 5'-phospho-(deoxyribonucleotide)m = (deoxyribonucleotide)n+m + AMP + beta-nicotinamide D-nucleotide.. Its function is as follows. DNA ligase that catalyzes the formation of phosphodiester linkages between 5'-phosphoryl and 3'-hydroxyl groups in double-stranded DNA using NAD as a coenzyme and as the energy source for the reaction. It is essential for DNA replication and repair of damaged DNA. This chain is DNA ligase, found in Streptococcus pneumoniae (strain CGSP14).